We begin with the raw amino-acid sequence, 368 residues long: Peptidoglycan-recognition protein LA (368 aa).

At methionine 1–asparagine 127 the chain is on the cytoplasmic side. Disordered stretches follow at residues glutamine 21 to leucine 46 and isoleucine 101 to arginine 122. Low complexity-rich tracts occupy residues threonine 33–glycine 43 and asparagine 102–asparagine 113. A helical membrane pass occupies residues threonine 128–valine 148. At glutamate 149 to glutamine 368 the chain is on the extracellular side. Cysteine 221 and cysteine 227 are disulfide-bonded. Residues threonine 233–asparagine 320 enclose the N-acetylmuramoyl-L-alanine amidase domain. N-linked (GlcNAc...) asparagine glycans are attached at residues asparagine 273 and asparagine 320.

Belongs to the N-acetylmuramoyl-L-alanine amidase 2 family. Expressed in uninduced hemocytes and mbn-2 cells.

It localises to the cell membrane. In terms of biological role, peptidoglycan-recognition protein probably involved in innate immunity by binding to peptidoglycans (PGN) of bacteria and activating the immune response. This chain is Peptidoglycan-recognition protein LA (PGRP-LA), found in Drosophila melanogaster (Fruit fly).